The chain runs to 242 residues: UPF0309 protein Oant_1457 (242 aa).

The SIS domain occupies 30-214 (AAELITAAAL…AKLVGKGDAP (185 aa)).

Belongs to the UPF0309 family.

The chain is UPF0309 protein Oant_1457 from Brucella anthropi (strain ATCC 49188 / DSM 6882 / CCUG 24695 / JCM 21032 / LMG 3331 / NBRC 15819 / NCTC 12168 / Alc 37) (Ochrobactrum anthropi).